The chain runs to 251 residues: Triosephosphate isomerase (251 aa).

Residues Asn12 and Lys14 each coordinate substrate. The Electrophile role is filled by His96. The active-site Proton acceptor is the Glu168.

It belongs to the triosephosphate isomerase family. Homodimer.

It is found in the cytoplasm. It localises to the glycosome. The enzyme catalyses D-glyceraldehyde 3-phosphate = dihydroxyacetone phosphate. It functions in the pathway carbohydrate biosynthesis; gluconeogenesis. It participates in carbohydrate degradation; glycolysis; D-glyceraldehyde 3-phosphate from glycerone phosphate: step 1/1. This Leishmania mexicana protein is Triosephosphate isomerase.